A 144-amino-acid chain; its full sequence is Large ribosomal subunit protein uL15 (144 aa).

The interval 1–56 (MELNNLKPAAGAKHAKRRVGRGIGSGLGKTAGRGHKGQKSRSGGFHKVGFEGGQMP) is disordered. A compositionally biased stretch (gly residues) spans 21–31 (RGIGSGLGKTA).

This sequence belongs to the universal ribosomal protein uL15 family. As to quaternary structure, part of the 50S ribosomal subunit.

Binds to the 23S rRNA. This is Large ribosomal subunit protein uL15 from Burkholderia cenocepacia (strain HI2424).